The sequence spans 712 residues: Cyclomaltodextrin glucanotransferase (712 aa).

The signal sequence occupies residues 1-27; it reads MKRFMKLTAVWTLWLSLTLGLLSPVHA. Positions 28–165 are A1; the sequence is APDTSVSNKQ…NIKVIIDFAP (138 aa). Positions 54, 56, 59, and 60 each coordinate Ca(2+). Residues cysteine 70 and cysteine 77 are joined by a disulfide bond. Ca(2+) is bound by residues glycine 78 and aspartate 80. Substrate is bound at residue 127-128; the sequence is YW. Asparagine 166 contributes to the Ca(2+) binding site. The segment at 166-229 is b; that stretch reads NHTSPASSDD…NLYDLADLNH (64 aa). Position 167 (histidine 167) interacts with substrate. Isoleucine 217 contributes to the Ca(2+) binding site. Position 220–223 (220–223) interacts with substrate; sequence NLYD. Aspartate 226 contributes to the Ca(2+) binding site. The tract at residues 230-433 is A2; the sequence is NNSSVDVYLK…LRKSNPAIAY (204 aa). Arginine 254 lines the substrate pocket. Aspartate 256 serves as the catalytic Nucleophile. Residue 259–260 participates in substrate binding; sequence KH. Residue histidine 260 coordinates Ca(2+). Catalysis depends on glutamate 284, which acts as the Proton donor. Residues histidine 354, aspartate 398, and arginine 402 each contribute to the substrate site. The tract at residues 434 to 522 is c; that stretch reads GSTQERWINN…GTAVWQYTTD (89 aa). The tract at residues 523–608 is d; sequence ATAPINGNVG…SNIYDNFEVL (86 aa). An IPT/TIG domain is found at 526–606; it reads PINGNVGPMM…AASNIYDNFE (81 aa). The CBM20 domain occupies 607–712; that stretch reads VLTGDQVTVR…TATVNVNWQP (106 aa). Residues 609–712 are e; sequence TGDQVTVRFV…TATVNVNWQP (104 aa).

The protein belongs to the glycosyl hydrolase 13 family. As to quaternary structure, monomer. Ca(2+) serves as cofactor.

The protein resides in the secreted. The enzyme catalyses Cyclizes part of a (1-&gt;4)-alpha-D-glucan chain by formation of a (1-&gt;4)-alpha-D-glucosidic bond.. The protein is Cyclomaltodextrin glucanotransferase (cgt) of Bacillus sp. (strain 38-2).